The following is a 398-amino-acid chain: Secreted aspartic protease 3 (398 aa).

An N-terminal signal peptide occupies residues 1-18 (MFLKNIFIALAIALLADA). Positions 19–58 (TPTTFNNSPGFVALNFDVIKTHKNVTGPQGEINTNVNVKR) are cleaved as a propeptide — activation peptide. Residue Asn42 is glycosylated (N-linked (GlcNAc...) asparagine). The Peptidase A1 domain occupies 72–384 (YASDITVGSN…DLDDNEISLA (313 aa)). The active site involves Asp90. 90 to 92 (DTG) is a pepstatin A binding site. Residues 103–112 (VSCQAGQGQD) show a composition bias toward polar residues. The disordered stretch occupies residues 103–139 (VSCQAGQGQDPNFCKNEGTYSPSSSSSSQNLNSPFSI). Cys105 and Cys116 form a disulfide bridge. The span at 123–138 (SPSSSSSSQNLNSPFS) shows a compositional bias: low complexity. 140 to 143 (EYGD) serves as a coordination point for pepstatin A. The Zn(2+) site is built by His188, Asp248, His254, and Asp270. The active site involves Asp274. 274–278 (DSGTT) provides a ligand contact to pepstatin A. Cys312 and Cys350 form a disulfide bridge. Asn313 is a glycosylation site (N-linked (GlcNAc...) asparagine).

The protein belongs to the peptidase A1 family. As to quaternary structure, monomer.

The protein resides in the secreted. The enzyme catalyses Preferential cleavage at the carboxyl of hydrophobic amino acids, but fails to cleave 15-Leu-|-Tyr-16, 16-Tyr-|-Leu-17 and 24-Phe-|-Phe-25 of insulin B chain. Activates trypsinogen, and degrades keratin.. Its activity is regulated as follows. Inhibited by pepstatin A analogs. Secreted aspartic peptidases (SAPs) are a group of ten acidic hydrolases considered as key virulence factors. These enzymes supply the fungus with nutrient amino acids as well as are able to degrade the selected host's proteins involved in the immune defense. Induces host inflammatory cytokine production in a proteolytic activity-independent way. Moreover, acts toward human hemoglobin though limited proteolysis to generate a variety of antimicrobial hemocidins, enabling to compete with the other microorganisms of the same physiological niche using the microbicidal peptides generated from the host protein. Functionally, plays a key role in defense against host by cleaving histatin-5 (Hst 5), a peptide from human saliva that carries out fungicidal activity. The cleavage rate decreases in an order of SAP2 &gt; SAP9 &gt; SAP3 &gt; SAP7 &gt; SAP4 &gt; SAP1 &gt; SAP8. The first cleavage occurs between residues 'Lys-17' and 'His-18' of Hst 5, giving DSHAKRHHGYKRKFHEK and HHSHRGY peptides. Simultaneously, the DSHAKRHHGYKRK peptide is also formed. Further fragmentation by SAP3 results in DSHAKRHHGY and KRKFHEK products. The protein is Secreted aspartic protease 3 of Candida albicans (strain SC5314 / ATCC MYA-2876) (Yeast).